A 255-amino-acid chain; its full sequence is MLLVFDVGNTNIVMGIYKGKKLLHSFRISTEKSKTSDEYGMLINQLFEYNGLKLKDVDAVIISSVVPPIMHTLESMTIKYCNTKPLIVGPGIKTGINIKYDNPKEVGADRIVNAVAAYEIYGGPVIVIDFGTATTFCAISKNCEYLGGIIAPGLAISADALFQRTAKLPKIELTKPSTVICKNTVSSMQSGIIYGHVGMVDYIVSRMKEEFAPNAYVVATGGFARMIAEESKTINTVNDMLTLEGLRIIYERNAD.

Residue 6 to 13 (DVGNTNIV) participates in ATP binding. Substrate-binding positions include Tyr100 and 107–110 (GADR). Asp109 acts as the Proton acceptor in catalysis. K(+) is bound at residue Asp129. Thr132 lines the ATP pocket. Thr184 lines the substrate pocket.

The protein belongs to the type III pantothenate kinase family. Homodimer. NH4(+) serves as cofactor. Requires K(+) as cofactor.

The protein resides in the cytoplasm. It carries out the reaction (R)-pantothenate + ATP = (R)-4'-phosphopantothenate + ADP + H(+). The protein operates within cofactor biosynthesis; coenzyme A biosynthesis; CoA from (R)-pantothenate: step 1/5. Its function is as follows. Catalyzes the phosphorylation of pantothenate (Pan), the first step in CoA biosynthesis. This Thermoanaerobacter sp. (strain X514) protein is Type III pantothenate kinase.